The chain runs to 220 residues: Uracil-DNA glycosylase (220 aa).

Residue aspartate 65 is the Proton acceptor of the active site.

Belongs to the uracil-DNA glycosylase (UDG) superfamily. UNG family.

It is found in the cytoplasm. The enzyme catalyses Hydrolyzes single-stranded DNA or mismatched double-stranded DNA and polynucleotides, releasing free uracil.. Functionally, excises uracil residues from the DNA which can arise as a result of misincorporation of dUMP residues by DNA polymerase or due to deamination of cytosine. This is Uracil-DNA glycosylase from Azobacteroides pseudotrichonymphae genomovar. CFP2.